A 236-amino-acid polypeptide reads, in one-letter code: Putative N-acetylmannosamine-6-phosphate 2-epimerase (236 aa).

It belongs to the NanE family.

The enzyme catalyses an N-acyl-D-glucosamine 6-phosphate = an N-acyl-D-mannosamine 6-phosphate. Its pathway is amino-sugar metabolism; N-acetylneuraminate degradation; D-fructose 6-phosphate from N-acetylneuraminate: step 3/5. Converts N-acetylmannosamine-6-phosphate (ManNAc-6-P) to N-acetylglucosamine-6-phosphate (GlcNAc-6-P). The chain is Putative N-acetylmannosamine-6-phosphate 2-epimerase from Listeria welshimeri serovar 6b (strain ATCC 35897 / DSM 20650 / CCUG 15529 / CIP 8149 / NCTC 11857 / SLCC 5334 / V8).